Consider the following 502-residue polypeptide: UDP-N-acetylmuramate--L-alanine ligase (502 aa).

120 to 126 (GTHGKTS) contacts ATP.

It belongs to the MurCDEF family.

The protein localises to the cytoplasm. It carries out the reaction UDP-N-acetyl-alpha-D-muramate + L-alanine + ATP = UDP-N-acetyl-alpha-D-muramoyl-L-alanine + ADP + phosphate + H(+). It participates in cell wall biogenesis; peptidoglycan biosynthesis. In terms of biological role, cell wall formation. The sequence is that of UDP-N-acetylmuramate--L-alanine ligase from Rhodococcus erythropolis (strain PR4 / NBRC 100887).